A 307-amino-acid chain; its full sequence is GTPase Era (307 aa).

Residues 17-186 (RCGFVAIVGR…LELIKPYLPE (170 aa)) enclose the Era-type G domain. Positions 25 to 32 (GRPNVGKS) are G1. 25–32 (GRPNVGKS) serves as a coordination point for GTP. Positions 51–55 (QTTRN) are G2. The G3 stretch occupies residues 72-75 (DTPG). GTP-binding positions include 72 to 76 (DTPGF) and 133 to 136 (NKID). The G4 stretch occupies residues 133–136 (NKID). The tract at residues 165–167 (VSA) is G5. A KH type-2 domain is found at 217 to 293 (LGEELPYAMN…FLKVWVKVKS (77 aa)).

Belongs to the TRAFAC class TrmE-Era-EngA-EngB-Septin-like GTPase superfamily. Era GTPase family. As to quaternary structure, monomer.

Its subcellular location is the cytoplasm. It is found in the cell inner membrane. Its function is as follows. An essential GTPase that binds both GDP and GTP, with rapid nucleotide exchange. Plays a role in 16S rRNA processing and 30S ribosomal subunit biogenesis and possibly also in cell cycle regulation and energy metabolism. In Neisseria meningitidis serogroup B (strain ATCC BAA-335 / MC58), this protein is GTPase Era.